A 142-amino-acid polypeptide reads, in one-letter code: Hemoglobin subunit alpha (142 aa).

Ser1 carries the post-translational modification N-acetylserine. Residues Ser1–Arg142 form the Globin domain. His59 is a binding site for O2. His88 provides a ligand contact to heme b.

The protein belongs to the globin family. In terms of assembly, hb1 is a heterotetramer of two alpha chains and two beta chains. HbC is a heterotetramer of two alpha chains and two beta-C chains. Red blood cells.

Involved in oxygen transport from gills to the various peripheral tissues. This is Hemoglobin subunit alpha (hba) from Trematomus bernacchii (Emerald rockcod).